The following is a 197-amino-acid chain: dITP/XTP pyrophosphatase (197 aa).

Residue 8–13 (TGNAGK) participates in substrate binding. Positions 40 and 69 each coordinate Mg(2+). Aspartate 69 serves as the catalytic Proton acceptor. Residues serine 70, 154–157 (FGYD), lysine 177, and 182–183 (HR) each bind substrate.

The protein belongs to the HAM1 NTPase family. Homodimer. The cofactor is Mg(2+).

It catalyses the reaction XTP + H2O = XMP + diphosphate + H(+). It carries out the reaction dITP + H2O = dIMP + diphosphate + H(+). The enzyme catalyses ITP + H2O = IMP + diphosphate + H(+). Pyrophosphatase that catalyzes the hydrolysis of nucleoside triphosphates to their monophosphate derivatives, with a high preference for the non-canonical purine nucleotides XTP (xanthosine triphosphate), dITP (deoxyinosine triphosphate) and ITP. Seems to function as a house-cleaning enzyme that removes non-canonical purine nucleotides from the nucleotide pool, thus preventing their incorporation into DNA/RNA and avoiding chromosomal lesions. The polypeptide is dITP/XTP pyrophosphatase (rdgB) (Salmonella typhi).